The chain runs to 217 residues: MKILVTGFDPFGGEKINPALETIKLLPNEILGAKIIKLEIPTVIGKSVAKIKDMIEKENPDVVLSIGQAGNRADISVERIGINIDDCRIPDNEGNQPIDEPVVKDGPAAYFVTLPIKAIVEKVKAGKIPASISNTAGTFICNHVCYGVAHIAAARTAQGKPMKSGFIHIPFLPEQVIGKPALTPSMSLEMIVKGIELAIEAIVQNNSDIKVSGGKIC.

Active-site residues include Glu-78, Cys-141, and His-168.

The protein belongs to the peptidase C15 family. As to quaternary structure, homotetramer.

The protein resides in the cytoplasm. It catalyses the reaction Release of an N-terminal pyroglutamyl group from a polypeptide, the second amino acid generally not being Pro.. Its function is as follows. Removes 5-oxoproline from various penultimate amino acid residues except L-proline. In Treponema denticola (strain ATCC 35405 / DSM 14222 / CIP 103919 / JCM 8153 / KCTC 15104), this protein is Pyrrolidone-carboxylate peptidase.